A 125-amino-acid polypeptide reads, in one-letter code: NADH-ubiquinone oxidoreductase chain 1 (125 aa).

Helical transmembrane passes span 5-25 (IFAF…VAFL), 74-94 (YLFF…WNFM), and 105-125 (LSLL…LGSG).

Belongs to the complex I subunit 1 family.

The protein resides in the mitochondrion inner membrane. It catalyses the reaction a ubiquinone + NADH + 5 H(+)(in) = a ubiquinol + NAD(+) + 4 H(+)(out). Functionally, core subunit of the mitochondrial membrane respiratory chain NADH dehydrogenase (Complex I) that is believed to belong to the minimal assembly required for catalysis. Complex I functions in the transfer of electrons from NADH to the respiratory chain. The immediate electron acceptor for the enzyme is believed to be ubiquinone. The chain is NADH-ubiquinone oxidoreductase chain 1 (ND1) from Arbacia lixula (Black urchin).